A 159-amino-acid polypeptide reads, in one-letter code: Transcriptional repressor NrdR (159 aa).

Residues 3 to 34 fold into a zinc finger; it reads CPFCRHEDTQVVDSRVSEDGAAIRRRRRCSAC. In terms of domain architecture, ATP-cone spans 49–139; it reads PAVVKKDGSR…VYRRFEDVSE (91 aa).

Belongs to the NrdR family. Zn(2+) is required as a cofactor.

Its function is as follows. Negatively regulates transcription of bacterial ribonucleotide reductase nrd genes and operons by binding to NrdR-boxes. This Burkholderia vietnamiensis (strain G4 / LMG 22486) (Burkholderia cepacia (strain R1808)) protein is Transcriptional repressor NrdR.